The primary structure comprises 338 residues: 4-hydroxythreonine-4-phosphate dehydrogenase (338 aa).

Residues histidine 140 and threonine 141 each contribute to the substrate site. A divalent metal cation-binding residues include histidine 172, histidine 217, and histidine 271. The substrate site is built by lysine 279, asparagine 288, and arginine 297.

It belongs to the PdxA family. As to quaternary structure, homodimer. A divalent metal cation serves as cofactor.

It localises to the cytoplasm. It carries out the reaction 4-(phosphooxy)-L-threonine + NAD(+) = 3-amino-2-oxopropyl phosphate + CO2 + NADH. It participates in cofactor biosynthesis; pyridoxine 5'-phosphate biosynthesis; pyridoxine 5'-phosphate from D-erythrose 4-phosphate: step 4/5. Functionally, catalyzes the NAD(P)-dependent oxidation of 4-(phosphooxy)-L-threonine (HTP) into 2-amino-3-oxo-4-(phosphooxy)butyric acid which spontaneously decarboxylates to form 3-amino-2-oxopropyl phosphate (AHAP). In Prosthecochloris aestuarii (strain DSM 271 / SK 413), this protein is 4-hydroxythreonine-4-phosphate dehydrogenase.